We begin with the raw amino-acid sequence, 86 residues long: Toxin Cn1 (86 aa).

The signal sequence occupies residues 1 to 19; sequence MNSLLMITACFVLIGTVWA. The LCN-type CS-alpha/beta domain maps to 20–84; that stretch reads KDGYLVDAKG…TWPLPNKTCS (65 aa). 4 disulfide bridges follow: Cys-30-Cys-83, Cys-34-Cys-59, Cys-43-Cys-64, and Cys-47-Cys-66. Ser-84 carries the post-translational modification Serine amide.

Belongs to the long (4 C-C) scorpion toxin superfamily. Sodium channel inhibitor family. Beta subfamily. Expressed by the venom gland.

It is found in the secreted. In terms of biological role, beta toxins bind voltage-independently at site-4 of sodium channels (Nav) and shift the voltage of activation toward more negative potentials thereby affecting sodium channel activation and promoting spontaneous and repetitive firing. This chain is Toxin Cn1, found in Centruroides noxius (Mexican scorpion).